Consider the following 322-residue polypeptide: Mas-related G-protein coupled receptor member X3 (322 aa).

Over 1–31 (MDSTIPVLGTELTPINGREETPCYKQTLSFT) the chain is Extracellular. A helical transmembrane segment spans residues 32–52 (GLTCIVSLVALTGNAVVLWLL). Topologically, residues 53–60 (GCRMRRNA) are cytoplasmic. The chain crosses the membrane as a helical span at residues 61-81 (VSIYILNLVAADFLFLSGHII). Residues 82 to 96 (CSPLRLINIRHPISK) lie on the Extracellular side of the membrane. A helical membrane pass occupies residues 97–117 (ILSPVMTFPYFIGLSMLSAIS). The Cytoplasmic segment spans residues 118 to 140 (TERCLSILWPIWYHCRRPRYLSS). Residues 141–161 (VMCVLLWALSLLRSILEWMFC) traverse the membrane as a helical segment. The Extracellular segment spans residues 162 to 177 (DFLFSGANSVWCETSD). Residues 178–198 (FITIAWLVFLCVVLCGSSLVL) traverse the membrane as a helical segment. The Cytoplasmic segment spans residues 199–213 (LVRILCGSRKMPLTR). The helical transmembrane segment at 214–234 (LYVTILLTVLVFLLCGLPFGI) threads the bilayer. At 235–254 (QWALFSRIHLDWKVLFCHVH) the chain is on the extracellular side. The helical transmembrane segment at 255–275 (LVSIFLSALNSSANPIIYFFV) threads the bilayer. Residues 276 to 322 (GSFRQRQNRQNLKLVLQRALQDTPEVDEGGGWLPQETLELSGSRLEQ) lie on the Cytoplasmic side of the membrane.

It belongs to the G-protein coupled receptor 1 family. Mas subfamily. In terms of tissue distribution, uniquely localized in a subset of small dorsal root and trigeminal sensory neurons.

It is found in the cell membrane. In terms of biological role, orphan receptor. Probably involved in the function of nociceptive neurons. May regulate nociceptor function and/or development, including the sensation or modulation of pain. Potently activated by enkephalins. The chain is Mas-related G-protein coupled receptor member X3 (MRGPRX3) from Homo sapiens (Human).